The sequence spans 215 residues: Ribosomal RNA small subunit methyltransferase G (215 aa).

S-adenosyl-L-methionine is bound by residues Gly73, Leu78, 125–126 (AE), and Arg140.

Belongs to the methyltransferase superfamily. RNA methyltransferase RsmG family.

It localises to the cytoplasm. In terms of biological role, specifically methylates the N7 position of guanine in position 518 of 16S rRNA. The protein is Ribosomal RNA small subunit methyltransferase G of Renibacterium salmoninarum (strain ATCC 33209 / DSM 20767 / JCM 11484 / NBRC 15589 / NCIMB 2235).